Here is a 289-residue protein sequence, read N- to C-terminus: Glycine--tRNA ligase alpha subunit (289 aa).

The protein belongs to the class-II aminoacyl-tRNA synthetase family. Tetramer of two alpha and two beta subunits.

The protein localises to the cytoplasm. It carries out the reaction tRNA(Gly) + glycine + ATP = glycyl-tRNA(Gly) + AMP + diphosphate. The polypeptide is Glycine--tRNA ligase alpha subunit (Rickettsia typhi (strain ATCC VR-144 / Wilmington)).